Reading from the N-terminus, the 114-residue chain is Non-specific lipid-transfer protein 1 (114 aa).

An N-terminal signal peptide occupies residues Met1 to Glu23. Intrachain disulfides connect Cys27/Cys73, Cys37/Cys50, Cys51/Cys96, and Cys71/Cys110.

It belongs to the plant LTP family.

Functionally, plant non-specific lipid-transfer proteins transfer phospholipids as well as galactolipids across membranes. May play a role in wax or cutin deposition in the cell walls of expanding epidermal cells and certain secretory tissues. In Solanum pennellii (Tomato), this protein is Non-specific lipid-transfer protein 1 (LTP1).